The primary structure comprises 3564 residues: CUB and sushi domain-containing protein 1 (3564 aa).

The first 26 residues, 1–26 (MTAWRRFQSLLLLLGLLVLCARLLTA), serve as a signal peptide directing secretion. At 27-3487 (AKGQNCGGLV…SHYHGTSSGS (3461 aa)) the chain is on the extracellular side. Intrachain disulfides connect Cys32/Cys58, Cys145/Cys185, Cys171/Cys202, Cys208/Cys234, Cys349/Cys389, Cys375/Cys406, Cys411/Cys437, Cys527/Cys567, Cys553/Cys580, and Cys584/Cys610. In terms of domain architecture, CUB 1 spans 32-140 (CGGLVQGPNG…QGFKALYEVL (109 aa)). N-linked (GlcNAc...) asparagine glycosylation is found at Asn40 and Asn57. Residues 143-204 (HTCGNPGEIL…WDFPAPFCRA (62 aa)) enclose the Sushi 1 domain. A CUB 2 domain is found at 208 to 312 (CGGTLRGTSS…KGFNAQFQVK (105 aa)). The Sushi 2 domain maps to 347 to 408 (DMCPDPGIPE…WSDHRPICRA (62 aa)). Positions 411-522 (CGSNLRGPSG…PGFKAVYQEI (112 aa)) constitute a CUB 3 domain. Residues 525–582 (GGCGDPGIPAYGKRTGSSFLHGDTLTFECPAAFELVGERVITCQQNNQWSGNKPSCVF) form the Sushi 3 domain. The 109-residue stretch at 584–692 (CFFNFTASSG…RGFNITYTTF (109 aa)) folds into the CUB 4 domain. N-linked (GlcNAc...) asparagine glycosylation is found at Asn587 and Asn686. Residues 695–756 (NECHDPGIPI…WSSTVPRCEA (62 aa)) form the Sushi 4 domain. Disulfide bonds link Cys697/Cys738, Cys723/Cys754, Cys758/Cys784, Cys873/Cys913, Cys899/Cys926, and Cys930/Cys956. Residues 758–866 (CGGHLTASSG…IGFLIHYESV (109 aa)) form the CUB 5 domain. The 58-residue stretch at 871 to 928 (DSCLDPGIPVNGHRHGGDFGIRSTVTFSCDPGYTLSDDEPLVCERNHQWNHALPSCDA) folds into the Sushi 5 domain. Positions 930–1040 (CGGYIQGKSG…EGFNITFSEY (111 aa)) constitute a CUB 6 domain. Residues Asn955, Asn1015, and Asn1034 are each glycosylated (N-linked (GlcNAc...) asparagine). The region spanning 1043–1102 (EPCDDPGVPAFSRRIGFHFGVGDSLTFSCFLGYRLEGATKLTCLGGGRRVWSAPLPRCVA) is the Sushi 6 domain. Disulfide bonds link Cys1045–Cys1085, Cys1071–Cys1100, and Cys1104–Cys1130. One can recognise a CUB 7 domain in the interval 1104-1212 (CGASVKGNEG…QGFQLTYTSF (109 aa)). Residues Asn1184 and Asn1197 are each glycosylated (N-linked (GlcNAc...) asparagine). The Sushi 7 domain occupies 1215–1275 (VKCEDPGIPN…WDKPLPSCIA (61 aa)). 12 disulfides stabilise this stretch: Cys1217-Cys1258, Cys1244-Cys1273, Cys1277-Cys1304, Cys1391-Cys1431, Cys1417-Cys1447, Cys1451-Cys1477, Cys1564-Cys1604, Cys1590-Cys1621, Cys1625-Cys1651, Cys1741-Cys1781, Cys1767-Cys1798, and Cys1802-Cys1828. The region spanning 1277–1386 (CGGQIHAATS…SGFSIQFSTS (110 aa)) is the CUB 8 domain. The Sushi 8 domain occupies 1389-1449 (ATCNDPGMPQ…WQPDPPTCIA (61 aa)). An N-linked (GlcNAc...) asparagine glycan is attached at Asn1399. Residues 1451-1559 (CGGNLTGPAG…SGFAIEFKEK (109 aa)) enclose the CUB 9 domain. 2 N-linked (GlcNAc...) asparagine glycosylation sites follow: Asn1454 and Asn1572. In terms of domain architecture, Sushi 9 spans 1562 to 1623 (EACFDPGNIM…WDQVLPSCNA (62 aa)). Residues 1625–1733 (CGGQYTGSEG…RGFHFVYQAV (109 aa)) enclose the CUB 10 domain. Residue Asn1644 is glycosylated (N-linked (GlcNAc...) asparagine). Positions 1739–1800 (TQCSSVPEPR…WNDTIPSCVV (62 aa)) constitute a Sushi 10 domain. N-linked (GlcNAc...) asparagine glycans are attached at residues Asn1792, Asn1805, and Asn1882. Residues 1802–1910 (CSGNFTQRRG…AGFHLEYKTV (109 aa)) form the CUB 11 domain. Residues 1913–1972 (AACQEPALPSNSIKIGDRYMVNDVLSFQCEPGYTLQGRSHISCMPGTVRRWNYPSPLCIA) enclose the Sushi 11 domain. 3 disulfides stabilise this stretch: Cys1915–Cys1955, Cys1941–Cys1970, and Cys1974–Cys2000. One can recognise a CUB 12 domain in the interval 1974–2082 (CGGTLSTLGG…QGFKLAYQAY (109 aa)). Asn2018 is a glycosylation site (N-linked (GlcNAc...) asparagine). The Sushi 12 domain maps to 2085-2144 (QNCPDPPPFQNGYMINSDYSVGQSVSFECYPGYILIGHPVLTCQHGINRNWNYPFPRCDA). Disulfide bonds link Cys2087/Cys2127, Cys2113/Cys2142, and Cys2146/Cys2172. A CUB 13 domain is found at 2146-2257 (CGYNVTSQNG…LNFHAFQLKK (112 aa)). 3 N-linked (GlcNAc...) asparagine glycosylation sites follow: Asn2149, Asn2154, and Asn2187. The Sushi 13 domain maps to 2256-2317 (KKCQPPPAVP…FEGSLPTCEA (62 aa)). Intrachain disulfides connect Cys2258/Cys2300, Cys2286/Cys2315, and Cys2319/Cys2347. The CUB 14 domain maps to 2319–2430 (CPANEVRTGS…KGFKIRYAAP (112 aa)). 6 N-linked (GlcNAc...) asparagine glycosylation sites follow: Asn2358, Asn2394, Asn2400, Asn2445, Asn2470, and Asn2503. Sushi domains are found at residues 2430–2492 (PYCS…LCQA), 2493–2554 (VSCG…TCKP), 2555–2619 (VACP…SCRV), 2620–2677 (ISCG…RCLA), 2678–2735 (GHCG…VCVP), 2736–2793 (ITCG…TCRV), 2794–2856 (VNCS…KCLA), 2857–2914 (ISCG…HCTG), 2918–2975 (GFCG…VCEA), 2976–3034 (VSCG…DCTI), 3035–3094 (ISCG…VCKA), 3095–3152 (VLCP…QCLP), 3153–3210 (VFCG…TCID), 3214–3272 (NTCP…ECIP), and 3273–3332 (HACR…VCKS). 12 cysteine pairs are disulfide-bonded: Cys2432–Cys2473, Cys2459–Cys2490, Cys2495–Cys2537, Cys2521–Cys2552, Cys2557–Cys2602, Cys2588–Cys2617, Cys2622–Cys2662, Cys2648–Cys2675, Cys2680–Cys2720, Cys2706–Cys2733, Cys2738–Cys2778, and Cys2764–Cys2791. An N-linked (GlcNAc...) asparagine glycan is attached at Asn2605. N-linked (GlcNAc...) asparagine glycans are attached at residues Asn2750 and Asn2761. N-linked (GlcNAc...) asparagine glycosylation occurs at Asn2795. Cystine bridges form between Cys2796/Cys2841, Cys2827/Cys2854, Cys2859/Cys2899, Cys2885/Cys2912, Cys2920/Cys2960, Cys2946/Cys2973, Cys2978/Cys3019, Cys3005/Cys3032, Cys3037/Cys3079, Cys3063/Cys3092, Cys3097/Cys3137, Cys3123/Cys3150, Cys3155/Cys3195, Cys3181/Cys3208, Cys3216/Cys3257, Cys3243/Cys3270, Cys3275/Cys3317, and Cys3302/Cys3330. Asn2894 carries an N-linked (GlcNAc...) asparagine glycan. A glycan (N-linked (GlcNAc...) asparagine) is linked at Asn2963. N-linked (GlcNAc...) asparagine glycans are attached at residues Asn3022 and Asn3056. A glycan (N-linked (GlcNAc...) asparagine) is linked at Asn3105. Asn3228 and Asn3260 each carry an N-linked (GlcNAc...) asparagine glycan. Asn3339, Asn3379, and Asn3386 each carry an N-linked (GlcNAc...) asparagine glycan. A helical membrane pass occupies residues 3488–3508 (VAAAILVPFFALILSGFAFYL). At 3509 to 3564 (YKHRTRPKVQYNGYAGHENSNGQASFENPMYDTNLKPTEAKAVRFDTTLNTVCTVV) the chain is on the cytoplasmic side.

It belongs to the CSMD family. As to expression, weakly expressed in most tissues, except in brain. Expressed at intermediate level in brain, including cerebellum, substantia nigra, hippocampus and fetal brain.

Its subcellular location is the membrane. In terms of biological role, potential suppressor of squamous cell carcinomas. The protein is CUB and sushi domain-containing protein 1 (CSMD1) of Homo sapiens (Human).